The primary structure comprises 229 residues: Ribonuclease 3 (229 aa).

An RNase III domain is found at 4–133 (WEELQESVGF…FIGALYLDNG (130 aa)). Glutamate 46 contacts Mg(2+). Residue aspartate 50 is part of the active site. Residues aspartate 119 and glutamate 122 each contribute to the Mg(2+) site. The active site involves glutamate 122. The DRBM domain occupies 159–228 (DYKTQLQEIV…AQFAINQLTH (70 aa)).

It belongs to the ribonuclease III family. Homodimer. It depends on Mg(2+) as a cofactor.

The protein resides in the cytoplasm. It catalyses the reaction Endonucleolytic cleavage to 5'-phosphomonoester.. Its function is as follows. Digests double-stranded RNA. Involved in the processing of primary rRNA transcript to yield the immediate precursors to the large and small rRNAs (23S and 16S). Processes some mRNAs, and tRNAs when they are encoded in the rRNA operon. Processes pre-crRNA and tracrRNA of type II CRISPR loci if present in the organism. This chain is Ribonuclease 3, found in Listeria innocua serovar 6a (strain ATCC BAA-680 / CLIP 11262).